The sequence spans 516 residues: uncharacterized protein (516 aa).

5 helical membrane passes run 10-27 (IRYP…GYWI), 32-54 (IGAF…GDFA), 64-83 (SFLF…PQFV), 95-117 (LLAV…ILGL), and 165-187 (AVCY…PALL). 2 consecutive RCK C-terminal domains span residues 208–291 (KPGL…SRAE) and 296–376 (RELL…NIGV). A run of 4 helical transmembrane segments spans residues 386-408 (FVVL…FPVG), 412-430 (IALS…VGHL), 443-465 (GAIS…IHAG), and 480-502 (LLGG…HFVL).

This sequence belongs to the AAE transporter (TC 2.A.81) family.

The protein resides in the cell membrane. This is an uncharacterized protein from Bradyrhizobium diazoefficiens (strain JCM 10833 / BCRC 13528 / IAM 13628 / NBRC 14792 / USDA 110).